Consider the following 352-residue polypeptide: Ion-translocating oxidoreductase complex subunit D (352 aa).

The next 4 helical transmembrane spans lie at 20–40 (IMLL…CFFG), 42–62 (GTLV…ALVL), 89–109 (IPPL…VIIA), and 123–143 (PAMI…TSWL). An FMN phosphoryl threonine modification is found at Thr187. The next 5 helical transmembrane spans lie at 215–235 (LAGA…VWLL), 242–262 (WHIP…GWLF), 267–287 (LAAP…FFIL), 301–321 (LIFG…GGYP), and 322–342 (DGVA…DYYT).

This sequence belongs to the NqrB/RnfD family. As to quaternary structure, the complex is composed of six subunits: RsxA, RsxB, RsxC, RsxD, RsxE and RsxG. Requires FMN as cofactor.

The protein resides in the cell inner membrane. In terms of biological role, part of a membrane-bound complex that couples electron transfer with translocation of ions across the membrane. Required to maintain the reduced state of SoxR. In Escherichia coli O7:K1 (strain IAI39 / ExPEC), this protein is Ion-translocating oxidoreductase complex subunit D.